The primary structure comprises 157 residues: Protein PEROXIN-4 (157 aa).

The UBC core domain occupies 3-153 (ASRARLFKEY…AQMYTRLAAM (151 aa)). C90 acts as the Glycyl thioester intermediate in catalysis.

It belongs to the ubiquitin-conjugating enzyme family. In terms of assembly, interacts with PEX22.

Its subcellular location is the peroxisome membrane. It carries out the reaction S-ubiquitinyl-[E1 ubiquitin-activating enzyme]-L-cysteine + [E2 ubiquitin-conjugating enzyme]-L-cysteine = [E1 ubiquitin-activating enzyme]-L-cysteine + S-ubiquitinyl-[E2 ubiquitin-conjugating enzyme]-L-cysteine.. Its pathway is protein modification; protein ubiquitination. In terms of biological role, required for peroxisome biogenesis. Necessary for the developmental elimination of obsolete peroxisome matrix proteins. May be involved in the ubiquitination of PEX5, targeting it for recycling. Accepts the ubiquitin from the E1 complex and catalyzes its covalent attachment to other proteins. This chain is Protein PEROXIN-4 (PEX4), found in Arabidopsis thaliana (Mouse-ear cress).